The sequence spans 1518 residues: WD repeat-containing protein 62 (1518 aa).

N-acetylalanine is present on Ala2. At Ser33 the chain carries Phosphoserine. A Phosphothreonine modification is found at Thr46. Residue Ser49 is modified to Phosphoserine. A Phosphothreonine modification is found at Thr50. A Phosphoserine modification is found at Ser52. WD repeat units follow at residues 109–150 (TARK…QVAE), 153–194 (GHKY…VVAS), 196–234 (KVSCRVIALSFSEDSSYFVTVGNRHVRFWFLEVSTETKV), 291–330 (INLKVSLSSCLCVSQELIFCGCTDGIVRIFQAHSLHYLAN), 357–396 (AVYPDTVALTFDPIHQWLSCVYKDHSIYIWDVKDINRVGK), 402–450 (FHSS…DSHW), 490–529 (DVKAGVRVMQVSPDGQHLASGDRSGNLRIHELHFMDELVK), 532–574 (AHDA…NLEQ), 578–618 (DHSS…DGLH), 626–665 (AEKTTLYDMDIDITQKYVAVACQDRNVRVYNTVNGKQKKC), 671–713 (GDEG…KMFG), and 714–752 (HSEIITSMKFTYDCHHLITVSGDSCVFIWHLGPEITNCM). Phosphoserine is present on Ser501. Basic and acidic residues predominate over residues 762-772 (RQQQQHTNDKK). 2 disordered regions span residues 762–824 (RQQQ…DPDP) and 908–935 (ASLLSESESPQEAGRGHPSFLPQQKESS). Positions 781 to 790 (TYVSTPSEIH) are enriched in polar residues. The span at 797-809 (QTEDDLEEECEPE) shows a compositional bias: acidic residues. Residues 803-846 (EEECEPEEMLKTPSKDSLDPDPRCLLTNGKLPLWAKRLLGDDDV) form a WD 13 repeat. The span at 810–824 (EMLKTPSKDSLDPDP) shows a compositional bias: basic and acidic residues. Over residues 908-920 (ASLLSESESPQEA) the composition is skewed to low complexity. The residue at position 944 (Ser944) is a Phosphoserine. Residues 962-1055 (EVEAGPGDQQ…PSSSLPQTPE (94 aa)) form a disordered region. 2 stretches are compositionally biased toward polar residues: residues 971 to 981 (QGDSYLRVSSD) and 1045 to 1054 (VPSSSLPQTP). A Phosphothreonine modification is found at Thr1053. Residues Ser1070, Ser1093, Ser1101, Ser1123, Ser1144, Ser1228, Ser1248, and Ser1249 each carry the phosphoserine modification. The WD 14 repeat unit spans residues 1132 to 1173 (GGSQPRAGTGYASPDRTHVLAAGKAEETLEAWRPPPPCLTSL). One copy of the WD 15 repeat lies at 1255 to 1293 (SLGQELQAITTATTPSLDSEGQEPALRSWGNHEARANLR). Phosphothreonine is present on Thr1268. Residues 1339-1377 (FRPSLPAPESPGLPAHPSNPQLPEARPGIPGGTASLLEP) are disordered.

As to quaternary structure, can form homodimers (via C-terminus). Interacts (via C-terminus) with MAPKBP1 (via C-terminus). Interacts with CDK5RAP2, CEP152, CEP63 and KIAA0753. CEP63, CDK5RAP2, CEP152, WDR62 are proposed to form a stepwise assembled complex at the centrosome forming a ring near parental centrioles. In terms of tissue distribution, present in fetal brain, enriched within the ventricular and subventricular zone (at protein level). In the embryonic brain it is expressed in mitotic neural precursor cells.

The protein resides in the nucleus. It localises to the cytoplasm. Its subcellular location is the cytoskeleton. The protein localises to the spindle pole. It is found in the microtubule organizing center. The protein resides in the centrosome. It localises to the centriole. Required for cerebral cortical development. Plays a role in neuronal proliferation and migration. Plays a role in mother-centriole-dependent centriole duplication; the function also seems to involve CEP152, CDK5RAP2 and CEP63 through a stepwise assembled complex at the centrosome that recruits CDK2 required for centriole duplication. The sequence is that of WD repeat-containing protein 62 (WDR62) from Homo sapiens (Human).